The following is a 357-amino-acid chain: Probable cinnamyl alcohol dehydrogenase 2 (357 aa).

Residue cysteine 47 participates in Zn(2+) binding. Serine 49 is an NADP(+) binding site. Zn(2+) contacts are provided by histidine 69, glutamate 70, cysteine 100, cysteine 103, cysteine 106, cysteine 114, and cysteine 163. NADP(+) contacts are provided by residues threonine 167, 188 to 193, 211 to 216, threonine 251, glycine 275, and 298 to 300; these read GLGGVG, SSSDKK, and SFI.

The protein belongs to the zinc-containing alcohol dehydrogenase family. As to quaternary structure, homodimer. Zn(2+) is required as a cofactor.

It catalyses the reaction (E)-cinnamyl alcohol + NADP(+) = (E)-cinnamaldehyde + NADPH + H(+). The catalysed reaction is (E)-coniferol + NADP(+) = (E)-coniferaldehyde + NADPH + H(+). The enzyme catalyses (E)-sinapyl alcohol + NADP(+) = (E)-sinapaldehyde + NADPH + H(+). It carries out the reaction (E)-4-coumaroyl alcohol + NADP(+) = (E)-4-coumaraldehyde + NADPH + H(+). It catalyses the reaction (E)-caffeyl alcohol + NADP(+) = (E)-caffeyl aldehyde + NADPH + H(+). The protein operates within aromatic compound metabolism; phenylpropanoid biosynthesis. Involved in lignin biosynthesis. Catalyzes the final step specific for the production of lignin monomers. Catalyzes the NADPH-dependent reduction of coniferaldehyde, 5-hydroxyconiferaldehyde, sinapaldehyde, 4-coumaraldehyde and caffeyl aldehyde to their respective alcohols. The polypeptide is Probable cinnamyl alcohol dehydrogenase 2 (CAD2) (Picea abies (Norway spruce)).